A 121-amino-acid polypeptide reads, in one-letter code: Small ribosomal subunit protein uS13 (121 aa).

Positions 91–121 are disordered; that stretch reads HRRGLPVRGQKTKNNARTRKGPVKTVANKKK.

The protein belongs to the universal ribosomal protein uS13 family. In terms of assembly, part of the 30S ribosomal subunit. Forms a loose heterodimer with protein S19. Forms two bridges to the 50S subunit in the 70S ribosome.

Located at the top of the head of the 30S subunit, it contacts several helices of the 16S rRNA. In the 70S ribosome it contacts the 23S rRNA (bridge B1a) and protein L5 of the 50S subunit (bridge B1b), connecting the 2 subunits; these bridges are implicated in subunit movement. Contacts the tRNAs in the A and P-sites. This is Small ribosomal subunit protein uS13 from Staphylococcus carnosus (strain TM300).